Consider the following 322-residue polypeptide: D-specific alpha-keto acid dehydrogenase (322 aa).

NAD(+) contacts are provided by residues 156-157 (QI), 229-231 (TGR), and Asp-255. Residue Arg-231 is part of the active site. The active site involves Glu-260. His-292 acts as the Proton donor in catalysis. An NAD(+)-binding site is contributed by 292–295 (HTAY).

The protein belongs to the D-isomer specific 2-hydroxyacid dehydrogenase family.

It carries out the reaction a (2R)-2-hydroxycarboxylate + NADP(+) = a 2-oxocarboxylate + NADPH + H(+). The enzyme catalyses a (2R)-2-hydroxycarboxylate + NAD(+) = a 2-oxocarboxylate + NADH + H(+). It catalyses the reaction (R)-lactate + NADP(+) = pyruvate + NADPH + H(+). The catalysed reaction is (R)-lactate + NAD(+) = pyruvate + NADH + H(+). It carries out the reaction (2R)-hydroxybutanoate + NADP(+) = 2-oxobutanoate + NADPH + H(+). In terms of biological role, required for high-level resistance to glycopeptide antibiotics. Catalyzes the reduction of 2-keto acids to 2-D-hydroxy acids, exhibiting highest catalytic efficiency with pyruvate and 2-oxobutanoate/alpha-ketobutyrate as substrates, producing D-lactate and (2R)-hydroxybutanoate, respectively. Together with D-alanine--D-lactate ligase VanA, gives rise to peptidoglycan precursors that terminate in the depsipeptide D-alanine-D-lactate rather than the dipeptide D-alanine-D-alanine thus preventing vancomycin binding. Shows a slight preference for NADPH over NADH as the electron donor. The polypeptide is D-specific alpha-keto acid dehydrogenase (Enterococcus faecium (Streptococcus faecium)).